The primary structure comprises 257 residues: 3-methyl-2-oxobutanoate hydroxymethyltransferase (257 aa).

2 residues coordinate Mg(2+): aspartate 42 and aspartate 81. 3-methyl-2-oxobutanoate-binding positions include 42 to 43 (DS), aspartate 81, and lysine 110. Glutamate 112 provides a ligand contact to Mg(2+). Glutamate 176 (proton acceptor) is an active-site residue.

It belongs to the PanB family. In terms of assembly, homodecamer; pentamer of dimers. Mg(2+) serves as cofactor.

The protein resides in the cytoplasm. It carries out the reaction 3-methyl-2-oxobutanoate + (6R)-5,10-methylene-5,6,7,8-tetrahydrofolate + H2O = 2-dehydropantoate + (6S)-5,6,7,8-tetrahydrofolate. Its pathway is cofactor biosynthesis; (R)-pantothenate biosynthesis; (R)-pantoate from 3-methyl-2-oxobutanoate: step 1/2. Its function is as follows. Catalyzes the reversible reaction in which hydroxymethyl group from 5,10-methylenetetrahydrofolate is transferred onto alpha-ketoisovalerate to form ketopantoate. The sequence is that of 3-methyl-2-oxobutanoate hydroxymethyltransferase from Pelagibacter ubique (strain HTCC1062).